The primary structure comprises 405 residues: Exodeoxyribonuclease 7 large subunit (405 aa).

It belongs to the XseA family. As to quaternary structure, heterooligomer composed of large and small subunits.

The protein resides in the cytoplasm. It carries out the reaction Exonucleolytic cleavage in either 5'- to 3'- or 3'- to 5'-direction to yield nucleoside 5'-phosphates.. In terms of biological role, bidirectionally degrades single-stranded DNA into large acid-insoluble oligonucleotides, which are then degraded further into small acid-soluble oligonucleotides. The chain is Exodeoxyribonuclease 7 large subunit from Syntrophomonas wolfei subsp. wolfei (strain DSM 2245B / Goettingen).